Consider the following 309-residue polypeptide: NAD kinase (309 aa).

Residue aspartate 89 is the Proton acceptor of the active site. NAD(+)-binding positions include 89-90 (DG), 163-164 (NE), arginine 191, aspartate 193, and 204-209 (TAYSLS).

The protein belongs to the NAD kinase family. A divalent metal cation is required as a cofactor.

It localises to the cytoplasm. The catalysed reaction is NAD(+) + ATP = ADP + NADP(+) + H(+). In terms of biological role, involved in the regulation of the intracellular balance of NAD and NADP, and is a key enzyme in the biosynthesis of NADP. Catalyzes specifically the phosphorylation on 2'-hydroxyl of the adenosine moiety of NAD to yield NADP. The polypeptide is NAD kinase (Shewanella halifaxensis (strain HAW-EB4)).